Reading from the N-terminus, the 213-residue chain is tRNA (guanine-N(7)-)-methyltransferase (213 aa).

S-adenosyl-L-methionine contacts are provided by E44, E69, D96, and D118. D118 is an active-site residue. K122 contacts substrate. The interaction with RNA stretch occupies residues 124-129; sequence RHEKRR. Substrate-binding positions include D154 and 191-194; that span reads TEYE.

This sequence belongs to the class I-like SAM-binding methyltransferase superfamily. TrmB family. In terms of assembly, homodimer.

The enzyme catalyses guanosine(46) in tRNA + S-adenosyl-L-methionine = N(7)-methylguanosine(46) in tRNA + S-adenosyl-L-homocysteine. The protein operates within tRNA modification; N(7)-methylguanine-tRNA biosynthesis. Catalyzes the formation of N(7)-methylguanine at position 46 (m7G46) in tRNA. The protein is tRNA (guanine-N(7)-)-methyltransferase of Bacillus subtilis (strain 168).